Here is a 955-residue protein sequence, read N- to C-terminus: MDIEDKSSKMHCMKGKHVAIICGVVIAVGLILGLGLGLGLKPEACNPPEDNGLLSTKPPTTSTPNVTNPSGSSVFCSAKNDENGAWTNFRLPNYVQPVHYDLDLTPEMEAEVYTGMVNISIRLEEQTTRHLWLHLRETKITEMPQLRTSSGQVIEIKRCFGYEPQEYVVIEAEEDLRPGNYFLSMKFKGYLNGSLVGFYSTTYGENGKTKYIAATDHEPTDARKSFPCFDEPNKKATYTISITHEHDYEAISNMPVEKTISLDNKWTKTIFKKSVPMSTYLVAWAVHQFKYEERISSRGIPLRVYAQPQQINTTIYAANVTKVVFDYFENYFNMNYSLPKLDKIAIPDFGTGAMENWGLITYRETNLLYDSQESAASNKQRVAAVVAHELVHQWFGNIVTMDWWDDLWLNEGFASFFEFMGVNAKEEKWQMLDQILIDDLLPVLKDDSLVSSHPITVNVSSPDEITSVFDGISYSKGASILRMLEDWISPDHFRAGCQKYLTDHYFKNAKTDDFWKAMEEVSGKPVREVMDTWTRQMGYPVLKVDLNSTVTQQRFLLDPKADPSKPSSQFSYKWNIPVKWKEGNTSSITFYNKSELAGITIMQPSDLPPDSFLKVNKDHVGFYRVNYEPQVWRTLADIMMKDHQNFNLTDRAGFIDDAFALARAGLLKYADALNLTRYLQNETEYIPWQRAVVAVSYIGQMVEDDKALYPKFQRYFGSLVKPIASELKWENDEDHIKSLLRTTVLEFACNMDDPEALGNASLLFKNWTSGISLDVNLRLLVYRFGMQNSGDEQAWNYMFEKYRTATLAQEKEKLLYGLASVKNITLLNRFLNCIKNTTLIRSQDVFTVLRYISFNSYGKTMAWDWVRLNWEYLVKRYTLNDRNLGRLISRISGTFNTELQLWQMENFFERYPDAGAGEASRKQALETTKSNIEWLKQYRDDVATWLENSEQPNFV.

Residues 1 to 17 (MDIEDKSSKMHCMKGKH) lie on the Cytoplasmic side of the membrane. The helical; Signal-anchor for type II membrane protein transmembrane segment at 18 to 38 (VAIICGVVIAVGLILGLGLGL) threads the bilayer. The Extracellular portion of the chain corresponds to 39 to 955 (GLKPEACNPP…LENSEQPNFV (917 aa)). The disordered stretch occupies residues 49–69 (EDNGLLSTKPPTTSTPNVTNP). The span at 55 to 69 (STKPPTTSTPNVTNP) shows a compositional bias: low complexity. N-linked (GlcNAc...) asparagine glycosylation is found at Asn-65, Asn-118, and Asn-192. Glu-218 is a binding site for substrate. N-linked (GlcNAc...) asparagine glycans are attached at residues Asn-312, Asn-319, and Asn-335. 352-356 (GAMEN) provides a ligand contact to substrate. Residue His-388 participates in Zn(2+) binding. Catalysis depends on Glu-389, which acts as the Proton acceptor. Zn(2+)-binding residues include His-392 and Glu-411. N-linked (GlcNAc...) asparagine glycosylation is found at Asn-458, Asn-547, Asn-584, Asn-592, Asn-647, Asn-674, Asn-681, Asn-759, Asn-766, Asn-823, and Asn-836. Substrate is bound at residue Arg-882.

Belongs to the peptidase M1 family. As to quaternary structure, homodimer; disulfide-linked. Zn(2+) serves as cofactor.

It is found in the cell membrane. The catalysed reaction is Release of N-terminal glutamate (and to a lesser extent aspartate) from a peptide.. The partially purified protein is inhibited by the aminopeptidase competitive inhibitors amastatin (Leu and acidic inhibitor), and bestatin (Leu inhibitor), by chelating agents EDTA, and 1,10-Phenanthroline, as well as by Zn(2+) ions. Substrate specificity is modulated by Ca(2+), Ba(2+), and Mn(2+) ions which enhances the enzymatic activity for cleavage of acidic residues. In terms of biological role, venom protein that cleaves N-terminal acidic residues from peptides with high potency in presence of calcium. It may have several roles in venom including alteration of blood pressure by cleaving circulating angiotensin-2, general degradation of host tissue, increase of permeability to other venom components, and/or processing of other toxins in the venom. This is Aminopeptidase A from Gloydius brevicauda (Korean slamosa snake).